Here is a 498-residue protein sequence, read N- to C-terminus: Angiopoietin-1 (498 aa).

The N-terminal stretch at 1–19 is a signal peptide; sequence MTVFLSFAFLAAILTHIGC. N-linked (GlcNAc...) asparagine glycosylation is found at Asn-92, Asn-122, Asn-154, Asn-243, and Asn-295. The stretch at 158 to 254 forms a coiled coil; it reads RLEIQLLENS…SVLQKQQLEL (97 aa). Residues 277–497 form the Fibrinogen C-terminal domain; it reads KEEVKPFRDC…STTMMIRPLD (221 aa). Disulfide bonds link Cys-286–Cys-315 and Cys-439–Cys-452.

As to quaternary structure, homooligomer. Interacts with TEK/TIE2. Interacts with SVEP1/polydom. Interacts with THBD; this interaction significantly inhibits the generation of activated PC and TAFIa/CPB2 by the thrombin/thrombomodulin complex.

Its subcellular location is the secreted. Functionally, binds and activates TIE2 receptor by inducing its tyrosine phosphorylation. Implicated in endothelial developmental processes later and distinct from that of VEGF. Appears to play a crucial role in mediating reciprocal interactions between the endothelium and surrounding matrix and mesenchyme. Mediates blood vessel maturation/stability. It may play an important role in the heart early development. This is Angiopoietin-1 (ANGPT1) from Sus scrofa (Pig).